Consider the following 309-residue polypeptide: MRGYKIFTGSAHPEFGGEIAKYLGIPLSSATVNRFSDGEINIQISESVRGRDVFIVQPTCAPTNDNLMELLIMIDALKRSSASSINAVIPYFGYARQDRKAAPRVPITAKLVADLLQRAGATRVITMDLHAGQIQGFFDIPVDNLYGSIVFRDYVKSKHLPNPIIASPDIGGVARARYFADQLGLDLVIVDKKREKANVSEVMNIIGDVQGKDVILVDDMIDTAGTMAKAAEVLKSKGATSVIALGTHPVFSGSAYEKIEKGALDEMVVANTIPLKKESSKIKVLSVAPLFAEVIRRVYHNESVNSLFV.

ATP is bound by residues 37–39 (DGE) and 96–97 (RQ). Mg(2+) contacts are provided by His130 and Asp169. Lys192 is a catalytic residue. D-ribose 5-phosphate is bound by residues Arg194, Asp218, and 222 to 226 (DTAGT).

It belongs to the ribose-phosphate pyrophosphokinase family. Class I subfamily. Homohexamer. Requires Mg(2+) as cofactor.

The protein localises to the cytoplasm. The enzyme catalyses D-ribose 5-phosphate + ATP = 5-phospho-alpha-D-ribose 1-diphosphate + AMP + H(+). It functions in the pathway metabolic intermediate biosynthesis; 5-phospho-alpha-D-ribose 1-diphosphate biosynthesis; 5-phospho-alpha-D-ribose 1-diphosphate from D-ribose 5-phosphate (route I): step 1/1. Its function is as follows. Involved in the biosynthesis of the central metabolite phospho-alpha-D-ribosyl-1-pyrophosphate (PRPP) via the transfer of pyrophosphoryl group from ATP to 1-hydroxyl of ribose-5-phosphate (Rib-5-P). The chain is Ribose-phosphate pyrophosphokinase from Wolinella succinogenes (strain ATCC 29543 / DSM 1740 / CCUG 13145 / JCM 31913 / LMG 7466 / NCTC 11488 / FDC 602W) (Vibrio succinogenes).